The sequence spans 317 residues: Ribosomal RNA small subunit methyltransferase H (317 aa).

S-adenosyl-L-methionine-binding positions include 39–41 (GGH), Asp59, Phe83, Asp104, and Gln111.

The protein belongs to the methyltransferase superfamily. RsmH family.

The protein resides in the cytoplasm. The enzyme catalyses cytidine(1402) in 16S rRNA + S-adenosyl-L-methionine = N(4)-methylcytidine(1402) in 16S rRNA + S-adenosyl-L-homocysteine + H(+). Functionally, specifically methylates the N4 position of cytidine in position 1402 (C1402) of 16S rRNA. This Paraburkholderia phymatum (strain DSM 17167 / CIP 108236 / LMG 21445 / STM815) (Burkholderia phymatum) protein is Ribosomal RNA small subunit methyltransferase H.